Here is a 231-residue protein sequence, read N- to C-terminus: Ribose-5-phosphate isomerase A (231 aa).

Substrate-binding positions include 32-35 (TGST), 85-88 (DGAD), and 98-101 (KGGG). Glu-107 acts as the Proton acceptor in catalysis. Lys-125 is a substrate binding site.

The protein belongs to the ribose 5-phosphate isomerase family. Homodimer.

The enzyme catalyses aldehydo-D-ribose 5-phosphate = D-ribulose 5-phosphate. The protein operates within carbohydrate degradation; pentose phosphate pathway; D-ribose 5-phosphate from D-ribulose 5-phosphate (non-oxidative stage): step 1/1. Its function is as follows. Catalyzes the reversible conversion of ribose-5-phosphate to ribulose 5-phosphate. This chain is Ribose-5-phosphate isomerase A, found in Paraburkholderia phytofirmans (strain DSM 17436 / LMG 22146 / PsJN) (Burkholderia phytofirmans).